The primary structure comprises 194 residues: Large ribosomal subunit protein uL6x (194 aa).

A Phosphothreonine modification is found at threonine 75.

The protein belongs to the universal ribosomal protein uL6 family.

The polypeptide is Large ribosomal subunit protein uL6x (RPL9D) (Arabidopsis thaliana (Mouse-ear cress)).